The primary structure comprises 179 residues: Large ribosomal subunit protein uL5 (179 aa).

The protein belongs to the universal ribosomal protein uL5 family. As to quaternary structure, part of the 50S ribosomal subunit; part of the 5S rRNA/L5/L18/L25 subcomplex. Contacts the 5S rRNA and the P site tRNA. Forms a bridge to the 30S subunit in the 70S ribosome.

Functionally, this is one of the proteins that bind and probably mediate the attachment of the 5S RNA into the large ribosomal subunit, where it forms part of the central protuberance. In the 70S ribosome it contacts protein S13 of the 30S subunit (bridge B1b), connecting the 2 subunits; this bridge is implicated in subunit movement. Contacts the P site tRNA; the 5S rRNA and some of its associated proteins might help stabilize positioning of ribosome-bound tRNAs. The chain is Large ribosomal subunit protein uL5 from Caldanaerobacter subterraneus subsp. tengcongensis (strain DSM 15242 / JCM 11007 / NBRC 100824 / MB4) (Thermoanaerobacter tengcongensis).